The primary structure comprises 347 residues: MITERQRQILNLIVSLYAKDHTPIGSKSLLDSIQASSATIRNDMKALERLGLIQKEHTSSGRIPSVSGYKYFVENVIQLEEFSQNDLFKVMKAFDGDFYRLSDLFKTAAKSLSELTGLTSFVLNAPQRDQQLVSFEMVMLDNHSVLSVITLGTGEVRTNQFILPKSMTEADLAVFSNLVKERLVGKKVIDIHYTLRTEIPQIVQRYFKVTSEVLQLFESIFDDLFKEHLTVAGHKNIFDYATDNLAELYKLFSDDERMLHEIREITNNDEMRAVKFDNDEKFMKNLTIISQKFVIPYRGFGTLTVVGPVEMDYQRTLSVLDLVAKVLTMKLSDYYRYLDGNHYEISK.

The protein belongs to the HrcA family.

Negative regulator of class I heat shock genes (grpE-dnaK-dnaJ and groELS operons). Prevents heat-shock induction of these operons. The protein is Heat-inducible transcription repressor HrcA of Lactococcus lactis subsp. cremoris (strain MG1363).